Reading from the N-terminus, the 449-residue chain is tRNA-2-methylthio-N(6)-dimethylallyladenosine synthase (449 aa).

An MTTase N-terminal domain is found at 4-119 (RTFHIETFGC…APQALDRLVE (116 aa)). Positions 13, 48, 82, 158, 162, and 165 each coordinate [4Fe-4S] cluster. The 232-residue stretch at 144–375 (GAVPASVFVN…QTLQNRLTER (232 aa)) folds into the Radical SAM core domain. Residues 378–446 (QDMVGRKVEV…KHSLLAEQAG (69 aa)) form the TRAM domain.

This sequence belongs to the methylthiotransferase family. MiaB subfamily. Monomer. The cofactor is [4Fe-4S] cluster.

It is found in the cytoplasm. The catalysed reaction is N(6)-dimethylallyladenosine(37) in tRNA + (sulfur carrier)-SH + AH2 + 2 S-adenosyl-L-methionine = 2-methylsulfanyl-N(6)-dimethylallyladenosine(37) in tRNA + (sulfur carrier)-H + 5'-deoxyadenosine + L-methionine + A + S-adenosyl-L-homocysteine + 2 H(+). In terms of biological role, catalyzes the methylthiolation of N6-(dimethylallyl)adenosine (i(6)A), leading to the formation of 2-methylthio-N6-(dimethylallyl)adenosine (ms(2)i(6)A) at position 37 in tRNAs that read codons beginning with uridine. In Nitratidesulfovibrio vulgaris (strain ATCC 29579 / DSM 644 / CCUG 34227 / NCIMB 8303 / VKM B-1760 / Hildenborough) (Desulfovibrio vulgaris), this protein is tRNA-2-methylthio-N(6)-dimethylallyladenosine synthase.